The sequence spans 2477 residues: Non-reducing polyketide synthase mapC (2477 aa).

Positions 14–269 are N-terminal acylcarrier protein transacylase domain (SAT); that stretch reads LLFGPQCSEI…HQQTHREGIQ (256 aa). Residues 403–820 enclose the Ketosynthase family 3 (KS3) domain; it reads MPPIAITGMA…GSNAALIVRD (418 aa). Residues cysteine 568, histidine 703, and histidine 742 each act as for beta-ketoacyl synthase activity in the active site. Residues 930 to 1233 form a malonyl-CoA:ACP transacylase (MAT) domain region; that stretch reads LCFGGQNGVT…HRVNLDGSDG (304 aa). The active-site For acyl/malonyl transferase activity is serine 1017. Residues 1302–1435 are N-terminal hotdog fold; the sequence is QERAGLLRKL…GSVSLCNERS (134 aa). The 311-residue stretch at 1302 to 1612 folds into the PKS/mFAS DH domain; the sequence is QERAGLLRKL…FMSVSIRSLT (311 aa). The product template (PT) domain stretch occupies residues 1307 to 1611; sequence LLRKLSDGPE…RFMSVSIRSL (305 aa). The Proton acceptor; for dehydratase activity role is filled by histidine 1336. The segment at 1461–1612 is C-terminal hotdog fold; that stretch reads ASNGLKGSTV…FMSVSIRSLT (152 aa). Aspartate 1518 acts as the Proton donor; for dehydratase activity in catalysis. The Carrier domain maps to 1651–1725; sequence DSDLVAVQEM…GLTEHIFPGH (75 aa). Serine 1685 bears the O-(pantetheine 4'-phosphoryl)serine mark. Positions 1882–2117 are methyltransferase (CMeT) domain; that stretch reads PYALEHDLLQ…GFEWVGWTNN (236 aa). Active-site for thioesterase activity residues include serine 2267 and aspartate 2421.

Its subcellular location is the cytoplasm. The protein resides in the cytosol. The enzyme catalyses 3 malonyl-CoA + acetyl-CoA + S-adenosyl-L-methionine + H(+) = 5-methylorsellinate + S-adenosyl-L-homocysteine + 3 CO2 + 4 CoA. Its pathway is secondary metabolite biosynthesis; terpenoid biosynthesis. Functionally, non-reducing polyketide synthase; part of the gene cluster that mediates the biosynthesis of mycophenolic acid (MPA), the first isolated antibiotic natural product in the world obtained from a culture of Penicillium brevicompactum in 1893. MpaC catalyzes the synthesis of 5-methylorsellinic acid (5MOA) via the condensation of 1 acetyl-CoA starter unit with 3 malonyl-CoA units and one methylation step. The first step of the pathway is the synthesis of 5-methylorsellinic acid (5MOA) by the cytosolic polyketide synthase mpaC. 5MOA is then converted to the phthalide compound 5,7-dihydroxy-4,6-dimethylphthalide (DHMP) by the endoplasmic reticulum-bound cytochrome P450 monooxygenase mpaDE. MpaDE first catalyzes hydroxylation of 5-MOA to 4,6-dihydroxy-2-(hydroxymethyl)-3-methylbenzoic acid (DHMB). MpaDE then acts as a lactone synthase that catalyzes the ring closure to convert DHMB into DHMP. The next step is the prenylation of DHMP by the Golgi apparatus-associated prenyltransferase mpaA to yield farnesyl-DHMP (FDHMP). The ER-bound oxygenase mpaB then mediates the oxidative cleavage the C19-C20 double bond in FDHMP to yield FDHMP-3C via a mycophenolic aldehyde intermediate. The O-methyltransferase mpaG catalyzes the methylation of FDHMP-3C to yield MFDHMP-3C. After the cytosolic methylation of FDHMP-3C, MFDHMP-3C enters into peroxisomes probably via free diffusion due to its low molecular weight. Upon a peroxisomal CoA ligation reaction, catalyzed by a beta-oxidation component enzyme acyl-CoA ligase ACL891, MFDHMP-3C-CoA would then be restricted to peroxisomes for the following beta-oxidation pathway steps. The peroxisomal beta-oxidation machinery than converts MFDHMP-3C-CoA into MPA_CoA, via a beta-oxidation chain-shortening process. Finally mpaH acts as a peroxisomal acyl-CoA hydrolase with high substrate specificity toward MPA-CoA to release the final product MPA. The polypeptide is Non-reducing polyketide synthase mapC (Penicillium roqueforti (strain FM164)).